A 312-amino-acid chain; its full sequence is HTH-type transcriptional regulator TdcA (312 aa).

An HTH lysR-type domain is found at 7 to 64 (PKTQHLVVFQEVIRSGSIGSAAKELGLTQPAVSKIINDIEDYFGVELVVRKNTGVTLT). The H-T-H motif DNA-binding region spans 24-43 (IGSAAKELGLTQPAVSKIIN).

Belongs to the LysR transcriptional regulatory family.

The protein operates within amino-acid degradation; L-threonine degradation via propanoate pathway [regulation]. Its function is as follows. Transcriptional activator for the tdcABCDE operon. In Escherichia coli O157:H7, this protein is HTH-type transcriptional regulator TdcA (tdcA).